The following is a 253-amino-acid chain: Probable transcriptional regulatory protein Hore_12350 (253 aa).

The interval 1–21 (MAGHSKWANIKHKKAKEDRKR) is disordered.

Belongs to the TACO1 family.

The protein resides in the cytoplasm. This Halothermothrix orenii (strain H 168 / OCM 544 / DSM 9562) protein is Probable transcriptional regulatory protein Hore_12350.